A 166-amino-acid chain; its full sequence is uncharacterized protein (166 aa).

3 4Fe-4S ferredoxin-type domains span residues 44–73, 75–104, and 139–166; these read ARED…LKQQ, ATLE…PNFP, and STLE…ITLK. Positions 53, 56, 59, 63, 84, 87, 90, and 94 each coordinate [4Fe-4S] cluster.

This is an uncharacterized protein from Haemophilus influenzae (strain ATCC 51907 / DSM 11121 / KW20 / Rd).